The primary structure comprises 1995 residues: Myosin-14 (1995 aa).

Positions 1-46 (MAAVTMSVPGRKAPPRPGPVPEAAQPFLFTPRGPSAGGGPGSGTSP) are disordered. The residue at position 2 (A2) is an N-acetylalanine. In terms of domain architecture, Myosin N-terminal SH3-like spans 51–101 (TARRLVWVPSELHGFEAAALRDEGEEEAEVELAESGRRLRLPRDQIQRMNP). Position 60 is a phosphoserine (S60). Residues 105–800 (SKAEDMAELT…VLAQLEEERD (696 aa)) form the Myosin motor domain. Position 198 to 205 (198 to 205 (GESGAGKT)) interacts with ATP. The segment at 678–700 (LSRLMATLSNTNPSFVRCIVPNH) is actin-binding. Residues 803-832 (VTDIIVSFQAAARGYLARRAFQKRQQQQSA) form the IQ domain. A coiled-coil region spans residues 862–1947 (LQVTRQDEVL…VTTLRNRLRR (1086 aa)). T1194 carries the phosphothreonine modification. Disordered stretches follow at residues 1371-1415 (EEAA…RRAA), 1592-1623 (QHER…VERD), 1905-1942 (EAEE…TTLR), and 1958-1995 (RQVF…AHPQ). Polar residues predominate over residues 1930 to 1942 (SAESMNREVTTLR). Phosphoserine occurs at positions 1969, 1980, 1983, and 1989. The span at 1981-1995 (GPSPEPEGSPPAHPQ) shows a compositional bias: pro residues.

It belongs to the TRAFAC class myosin-kinesin ATPase superfamily. Myosin family. As to quaternary structure, myosin is a hexameric protein that consists of 2 heavy chain subunits (MHC), 2 alkali light chain subunits (MLC) and 2 regulatory light chain subunits (MLC-2). In terms of tissue distribution, high levels of expression are found in brain (highest in corpus callosum), heart, kidney, liver, lung, small intestine, colon and skeletal muscle. Expression is low in organs composed mainly of smooth muscle, such as aorta, uterus and urinary bladder. No detectable expression is found in thymus, spleen, placenta and lymphocytes.

Cellular myosin that appears to play a role in cytokinesis, cell shape, and specialized functions such as secretion and capping. The protein is Myosin-14 (MYH14) of Homo sapiens (Human).